Consider the following 458-residue polypeptide: ATP synthase subunit beta (458 aa).

Glycine 148–threonine 155 is a binding site for ATP.

This sequence belongs to the ATPase alpha/beta chains family. F-type ATPases have 2 components, CF(1) - the catalytic core - and CF(0) - the membrane proton channel. CF(1) has five subunits: alpha(3), beta(3), gamma(1), delta(1), epsilon(1). CF(0) has three main subunits: a(1), b(2) and c(9-12). The alpha and beta chains form an alternating ring which encloses part of the gamma chain. CF(1) is attached to CF(0) by a central stalk formed by the gamma and epsilon chains, while a peripheral stalk is formed by the delta and b chains.

The protein resides in the cell inner membrane. The catalysed reaction is ATP + H2O + 4 H(+)(in) = ADP + phosphate + 5 H(+)(out). Its function is as follows. Produces ATP from ADP in the presence of a proton gradient across the membrane. The catalytic sites are hosted primarily by the beta subunits. The polypeptide is ATP synthase subunit beta (Legionella pneumophila (strain Paris)).